We begin with the raw amino-acid sequence, 556 residues long: Dihydroxy-acid dehydratase (556 aa).

D78 lines the Mg(2+) pocket. C119 lines the [2Fe-2S] cluster pocket. Residues D120 and K121 each contribute to the Mg(2+) site. At K121 the chain carries N6-carboxylysine. A [2Fe-2S] cluster-binding site is contributed by C191. Residue E442 participates in Mg(2+) binding. The active-site Proton acceptor is the S468.

It belongs to the IlvD/Edd family. As to quaternary structure, homodimer. The cofactor is [2Fe-2S] cluster. Mg(2+) serves as cofactor.

It carries out the reaction (2R)-2,3-dihydroxy-3-methylbutanoate = 3-methyl-2-oxobutanoate + H2O. The catalysed reaction is (2R,3R)-2,3-dihydroxy-3-methylpentanoate = (S)-3-methyl-2-oxopentanoate + H2O. It functions in the pathway amino-acid biosynthesis; L-isoleucine biosynthesis; L-isoleucine from 2-oxobutanoate: step 3/4. The protein operates within amino-acid biosynthesis; L-valine biosynthesis; L-valine from pyruvate: step 3/4. Its function is as follows. Functions in the biosynthesis of branched-chain amino acids. Catalyzes the dehydration of (2R,3R)-2,3-dihydroxy-3-methylpentanoate (2,3-dihydroxy-3-methylvalerate) into 2-oxo-3-methylpentanoate (2-oxo-3-methylvalerate) and of (2R)-2,3-dihydroxy-3-methylbutanoate (2,3-dihydroxyisovalerate) into 2-oxo-3-methylbutanoate (2-oxoisovalerate), the penultimate precursor to L-isoleucine and L-valine, respectively. This is Dihydroxy-acid dehydratase from Clostridium beijerinckii (strain ATCC 51743 / NCIMB 8052) (Clostridium acetobutylicum).